The sequence spans 410 residues: Tyrosine--tRNA ligase (410 aa).

Tyr36 provides a ligand contact to L-tyrosine. Residues 41-50 (ATADSLTAGH) carry the 'HIGH' region motif. L-tyrosine is bound by residues Tyr169 and Gln173. The short motif at 229–233 (KMGKT) is the 'KMSKS' region element. An ATP-binding site is contributed by Lys232. The S4 RNA-binding domain occupies 343–409 (IDLITMMIDA…GKKAYHLFRA (67 aa)).

It belongs to the class-I aminoacyl-tRNA synthetase family. TyrS type 1 subfamily. As to quaternary structure, homodimer.

It is found in the cytoplasm. It catalyses the reaction tRNA(Tyr) + L-tyrosine + ATP = L-tyrosyl-tRNA(Tyr) + AMP + diphosphate + H(+). In terms of biological role, catalyzes the attachment of tyrosine to tRNA(Tyr) in a two-step reaction: tyrosine is first activated by ATP to form Tyr-AMP and then transferred to the acceptor end of tRNA(Tyr). This Lachnoclostridium phytofermentans (strain ATCC 700394 / DSM 18823 / ISDg) (Clostridium phytofermentans) protein is Tyrosine--tRNA ligase.